Here is a 669-residue protein sequence, read N- to C-terminus: Cytokinesis protein 2 (669 aa).

The F-BAR domain occupies 1-261; the sequence is MSYSYEACFW…HLNSFTAADE (261 aa). The stretch at 134 to 200 forms a coiled coil; the sequence is KKGCEVLQKK…LKQEYKASQK (67 aa). A phosphoserine mark is found at Ser-337 and Ser-366. The interval 372–518 is disordered; sequence VQLQSNVDDS…DYNTRRDTST (147 aa). 2 stretches are compositionally biased toward basic and acidic residues: residues 381–391 and 397–413; these read SVLRQKPDKPR and EQLK…EKGL. Ser-421 carries the phosphoserine modification. Low complexity-rich tracts occupy residues 421–431 and 445–455; these read SLSSPSESSSS and MESMTTSVSSM. Positions 599-667 constitute an SH3 domain; it reads PVIEYAKAMY…PYNFIQLLHQ (69 aa).

Interacts with INN1.

It localises to the cytoplasm. The protein localises to the cytoskeleton. Its subcellular location is the bud neck. In terms of biological role, throughout most of the cell cycle it forms a double ring that coincides with the septins. After the onset of mitosis, forms a ring-like structure which colocalizes with the medial actin ring. Mediates cytoskeletal rearrangements required for cytokinesis. In conjunction with the medial actin ring exhibits contraction-like action. This chain is Cytokinesis protein 2 (HOF1), found in Saccharomyces cerevisiae (strain ATCC 204508 / S288c) (Baker's yeast).